Reading from the N-terminus, the 101-residue chain is uncharacterized protein (101 aa).

A helical transmembrane segment spans residues 58-80; it reads VFPSLNIIILMSDALMFFLRSSI.

It localises to the membrane. This is an uncharacterized protein from Saccharomyces cerevisiae (strain ATCC 204508 / S288c) (Baker's yeast).